Reading from the N-terminus, the 266-residue chain is Enterotoxin type C-1 (266 aa).

A signal peptide spans methionine 1–alanine 27. Cysteine 120 and cysteine 137 are joined by a disulfide.

Belongs to the staphylococcal/streptococcal toxin family. As to quaternary structure, interacts with host MHC class II molecules composed of alpha/HLA-DRA and beta/HLA-DRB1 chains.

Its subcellular location is the secreted. Staphylococcal enterotoxin that activates the host immune system by binding as unprocessed molecules to major histocompatibility (MHC) complex class II and T-cell receptor (TCR) molecules. In turn, this ternary complex activates a large number of T-lymphocytes initiating a systemic release of pro-inflammatory cytokines. Inhibits SEC1-mediated T-cell activation in the absence of MHC class II by competing with SEC1 for binding to the host TCR. Also causes the intoxication staphylococcal food poisoning syndrome. The chain is Enterotoxin type C-1 (entC1) from Staphylococcus aureus.